Consider the following 723-residue polypeptide: MSITRPTGSYARQMLDPGGWVEADEDTFYDRAQEYSQVLQRVTDVLDTCRQQKGHVFEGGLWSGGAANAANGALGANINQLMTLQDYLATVITWHRHIAGLIEQAKSDIGNNVDGAQREIDILENDPSLDADERHTAINSLVTATHGANVSLVAETAERVLESKNWKPPKNALEDLLQQKSPPPPDVPTLVVPSPGTPGTPGTPITPGTPITPIPGAPVTPITPTPGTPVTPVTPGKPVTPVTPVKPGTPGEPTPITPVTPPVAPATPATPATPVTPAPAPHPQPAPAPAPSPGPQPVTPATPGPSGPATPGTPGGEPAPHVKPAALAEQPGVPGQHAGGGTQSGPAHADESAASVTPAAASGVPGARAAAAAPSGTAVGAGARSSVGTAAASGAGSHAATGRAPVATSDKAAAPSTRAASARTAPPARPPSTDHIDKPDRSESADDGTPVSMIPVSAARAARDAATAAASARQRGRGDALRLARRIAAALNASDNNAGDYGFFWITAVTTDGSIVVANSYGLAYIPDGMELPNKVYLASADHAIPVDEIARCATYPVLAVQAWAAFHDMTLRAVIGTAEQLASSDPGVAKIVLEPDDIPESGKMTGRSRLEVVDPSAAAQLADTTDQRLLDLLPPAPVDVNPPGDERHMLWFELMKPMTSTATGREAAHLRAFRAYAAHSQEIALHQAHTATDAAVQRVAVADWLYWQYVTGLLDRALAAAS.

Disordered stretches follow at residues 175–360 (DLLQ…TPAA) and 393–451 (SGAG…GTPV). A compositionally biased stretch (low complexity) spans 200–209 (TPGTPITPGT). The span at 210 to 229 (PITPIPGAPVTPITPTPGTP) shows a compositional bias: pro residues. Residues 230–249 (VTPVTPGKPVTPVTPVKPGT) are compositionally biased toward low complexity. Composition is skewed to pro residues over residues 250–265 (PGEP…PVAP) and 274–308 (PVTP…PSGP). Low complexity-rich tracts occupy residues 309 to 319 (ATPGTPGGEPA), 393 to 404 (SGAGSHAATGRA), and 412 to 426 (AAAP…RTAP). The segment covering 432–444 (STDHIDKPDRSES) has biased composition (basic and acidic residues).

It is found in the cytoplasm. Functionally, may act as a chaperone that facilitates EspB secretion through an interaction with EccCb1. This Mycobacterium tuberculosis (strain CDC 1551 / Oshkosh) protein is ESX-1 secretion-associated protein EspK.